A 183-amino-acid polypeptide reads, in one-letter code: Mid1-interacting protein 1 (183 aa).

An N-acetylmethionine modification is found at Met-1. Phosphoserine occurs at positions 75 and 79.

The protein belongs to the SPOT14 family. Homodimer in the absence of THRSP. Heterodimer with THRSP. The homodimer interacts with ACACA and ACACB. Promotes polymerization of Acetyl-CoA carboxylase to form complexes that contain MID1IP1 and ACACA and/or ACACB. Interaction with THRSP interferes with ACACA binding.

Its subcellular location is the nucleus. It localises to the cytoplasm. It is found in the cytoskeleton. Its function is as follows. Plays a role in the regulation of lipogenesis in liver. Up-regulates ACACA enzyme activity. Required for efficient lipid biosynthesis, including triacylglycerol, diacylglycerol and phospholipid. Involved in stabilization of microtubules. The sequence is that of Mid1-interacting protein 1 (MID1IP1) from Homo sapiens (Human).